A 2298-amino-acid polypeptide reads, in one-letter code: Protein Ycf2 (2298 aa).

Residue 1652 to 1659 (GSIGTGRS) participates in ATP binding.

The protein belongs to the Ycf2 family.

It is found in the plastid. Its subcellular location is the chloroplast stroma. Functionally, probable ATPase of unknown function. Its presence in a non-photosynthetic plant (Epifagus virginiana) and experiments in tobacco indicate that it has an essential function which is probably not related to photosynthesis. In Aethionema cordifolium (Lebanon stonecress), this protein is Protein Ycf2.